The sequence spans 384 residues: GDSL esterase/lipase At1g71691 (384 aa).

A signal peptide spans 1–27; it reads MAFHFRRLCFFSALLAVVLQLLHGVSG. S62 acts as the Nucleophile in catalysis. Residues D348 and H351 contribute to the active site.

It belongs to the 'GDSL' lipolytic enzyme family.

It localises to the secreted. The polypeptide is GDSL esterase/lipase At1g71691 (Arabidopsis thaliana (Mouse-ear cress)).